The following is a 154-amino-acid chain: MAARLCCQLDPARDVLCLRPVGAESRGRPLPGPLGALPPASPPAVPSDHGAHLSLRGLPVCAFSSAGPCALRFTSARRMETTVNAHRNLPKVLHKRTLGLSAMSTTDLEAHFKDCVFTEWEELGEEIRLKVFVLGGCRHKLVCSPAPCNFFTSA.

The segment at 68-117 is mitochondrial targeting sequence; sequence PCALRFTSARRMETTVNAHRNLPKVLHKRTLGLSAMSTTDLEAHFKDCVF.

Belongs to the orthohepadnavirus protein X family. As to quaternary structure, may form homodimer. May interact with host CEBPA, CFLAR, CREB1, DDB1, E4F1, HBXIP, HSPD1/HSP60, NFKBIA, POLR2E and SMAD4. Interacts with host SMC5-SMC6 complex and induces its degradation. Interacts with host TRPC4AP; leading to prevent ubiquitination of TRPC4AP. Interacts with host PLSCR1; this interaction promotes ubiquitination and degradation of HBx and impairs HBx-mediated cell proliferation. In terms of processing, a fraction may be phosphorylated in insect cells and HepG2 cells, a human hepatoblastoma cell line. Phosphorylated in vitro by host protein kinase C or mitogen-activated protein kinase. N-acetylated in insect cells.

The protein localises to the host cytoplasm. Its subcellular location is the host nucleus. The protein resides in the host mitochondrion. Multifunctional protein that plays a role in silencing host antiviral defenses and promoting viral transcription. Does not seem to be essential for HBV infection. May be directly involved in development of cirrhosis and liver cancer (hepatocellular carcinoma). Most of cytosolic activities involve modulation of cytosolic calcium. The effect on apoptosis is controversial depending on the cell types in which the studies have been conducted. May induce apoptosis by localizing in mitochondria and causing loss of mitochondrial membrane potential. May also modulate apoptosis by binding host CFLAR, a key regulator of the death-inducing signaling complex (DISC). Promotes viral transcription by using the host E3 ubiquitin ligase DDB1 to target the SMC5-SMC6 complex to proteasomal degradation. This host complex would otherwise bind to viral episomal DNA, and prevents its transcription. Moderately stimulates transcription of many different viral and cellular transcription elements. Promoters and enhancers stimulated by HBx contain DNA binding sites for NF-kappa-B, AP-1, AP-2, c-EBP, ATF/CREB, or the calcium-activated factor NF-AT. This chain is Protein X, found in Hepatitis B virus genotype B2 (isolate Indonesia/pIDW420/1988) (HBV-B).